The following is a 1276-amino-acid chain: Receptor-type guanylate cyclase gcy-28 (1276 aa).

Positions 1 to 18 (MLRWLTLLSCILLTALHG) are cleaved as a signal peptide. Residues 19 to 515 (NIVEDVGAAQ…KSKCPGYPLH (497 aa)) lie on the Extracellular side of the membrane. N-linked (GlcNAc...) asparagine glycosylation is found at Asn-87, Asn-196, Asn-338, Asn-384, Asn-387, Asn-414, Asn-428, and Asn-444. Residues 516-536 (VYLLMGSFLLILVLVGLFIFF) form a helical membrane-spanning segment. Residues 537-1276 (WRRYKLEQEL…EIPDFGEEFA (740 aa)) lie on the Cytoplasmic side of the membrane. Disordered stretches follow at residues 562 to 601 (ESQKKNEKKKAKKRKNHNDYLPESDPLLRSTSRSSVNSDK) and 635 to 709 (IFTR…KKSL). A compositionally biased stretch (basic residues) spans 567–577 (NEKKKAKKRKN). Polar residues-rich tracts occupy residues 590 to 599 (RSTSRSSVNS) and 642 to 660 (TPPSESQKNGGLTPNSLQK). In terms of domain architecture, Protein kinase spans 717-1013 (SFGMVSFKSG…SSVRKAVRSL (297 aa)). ATP is bound by residues 723–731 (FKSGSGGSV) and Lys-756. A coiled-coil region spans residues 1017–1063 (NETSNLVDNLLKRMEQYANNLEGLVEERTQEYLAEKKKVEELLHQLL). In terms of domain architecture, Guanylate cyclase spans 1086–1215 (TIYFSDIVGF…DTVNTSSRME (130 aa)). Mg(2+) contacts are provided by Asp-1091, Ile-1092, and Asp-1135.

It belongs to the adenylyl cyclase class-4/guanylyl cyclase family. Expressed in head neurons, ventral cord and tail neurons, body wall muscle, hypodermis, somatic gonad and intestine. Isoform d is expressed specifically in AIA interneurons.

The protein resides in the cell membrane. It is found in the cell projection. The protein localises to the dendrite. It localises to the axon. Its subcellular location is the perikaryon. The enzyme catalyses GTP = 3',5'-cyclic GMP + diphosphate. Functionally, guanylate cyclase involved in the production of the second messenger cGMP. Regulates olfactory perception in AWC sensory neurons although may not be involved in the primary sensory transduction steps. In terms of biological role, isoforms c: Regulates sensory integration of conflicting sensory cues in AIA interneurons. Regulates sensory integration of conflicting sensory cues in AIA interneurons. This is Receptor-type guanylate cyclase gcy-28 from Caenorhabditis elegans.